The sequence spans 44 residues: Thaumatin-like protein 5 (44 aa).

This sequence belongs to the thaumatin family.

This Glebionis coronaria (Crown daisy) protein is Thaumatin-like protein 5.